The chain runs to 88 residues: Putative membrane protein insertion efficiency factor (88 aa).

It belongs to the UPF0161 family.

It localises to the cell inner membrane. In terms of biological role, could be involved in insertion of integral membrane proteins into the membrane. This chain is Putative membrane protein insertion efficiency factor, found in Synechococcus sp. (strain CC9311).